The primary structure comprises 180 residues: Centromere protein M (180 aa).

In terms of assembly, component of the CENPA-NAC complex, at least composed of CENPA, CENPC, CENPH, CENPM, CENPN, CENPT and CENPU. The CENPA-NAC complex interacts with the CENPA-CAD complex, composed of CENPI, CENPK, CENPL, CENPO, CENPP, CENPQ, CENPR and CENPS. Isoform 3 is highly expressed in spleen, and intermediately in heart, prostate and ovary. Isoform 3 is highly expressed in resting CD19 B-cells and B-lineage chronic lymphocytic leukemia (B-CLL) cells and weakly expressed in activated B-cells. Isoform 1 is selectively expressed in activated CD19 cells and weakly in resting CD19 B-cells.

It localises to the nucleus. The protein resides in the cytoplasm. Its subcellular location is the chromosome. The protein localises to the centromere. It is found in the kinetochore. Functionally, component of the CENPA-NAC (nucleosome-associated) complex, a complex that plays a central role in assembly of kinetochore proteins, mitotic progression and chromosome segregation. The CENPA-NAC complex recruits the CENPA-CAD (nucleosome distal) complex and may be involved in incorporation of newly synthesized CENPA into centromeres. The protein is Centromere protein M (CENPM) of Homo sapiens (Human).